The primary structure comprises 504 residues: CDK5 regulatory subunit-associated protein 3 (504 aa).

3 consecutive short sequence motifs (shuffled ATG8-binding motif) follow at residues 266–269 (IDWG), 290–293 (IDWG), and 308–311 (IDWG). The tract at residues 268–504 (WGDFGLEAVS…RPVNLMGTSV (237 aa)) is required for interaction with UFL1 and mediates interaction with CHEK1. The interval 353-368 (DELMELEIFLSQRAVE) is RPL10a-binding domain (RBD). Lys-448 is covalently cross-linked (Glycyl lysine isopeptide (Lys-Gly) (interchain with G-Cter in SUMO2)).

This sequence belongs to the CDK5RAP3 family. As to quaternary structure, substrate adapter component of the UFM1 ribosome E3 ligase (UREL) complex, composed of UFL1, DDRGK1 and CDK5RAP3. Interaction with UFL1 anchors CDK5RAP3 in the cytoplasm, preventing its translocation to the nucleus which allows expression of the CCND1 cyclin and progression of cells through the G1/S transition. Interacts with ATG8 family proteins MAP1LC3A, MAP1LC3B, GABARAP, GABARAPL1 and GABARAPL2. Interacts with CDK5R1; competes with CDK5RAP1 and CDK5RAP2. Interacts with RELA. Interacts with CHEK1; may negatively regulate CHEK1 and thereby stimulate entry into mitosis. Interacts with CDKN2A/ARF and MDM2; forms a ternary complex involved in regulation of p53/TP53. Interacts with MAPK14. Interacts with CCNB1. Interacts with TUBG1; may regulate CDK5RAP3 in mitotic G2/M transition checkpoint. May be phosphorylated by CDK5. In terms of processing, ubiquitinated. Probably triggers proteasomal degradation and is negatively regulated by UFL1. Post-translationally, may be ufmylated. Cleaved by caspases early during apoptosis, the resulting peptides may play a role in rupture of the nuclear envelope. As to expression, expressed in vascular endothelium. Up-regulated in failing heart. Highly expressed in the ventricular section in subacute and chronic ischemic heart failure.

Its subcellular location is the endoplasmic reticulum membrane. It localises to the cytoplasm. The protein resides in the nucleus. The protein localises to the cytoskeleton. It is found in the microtubule organizing center. Its subcellular location is the centrosome. Functionally, substrate adapter of E3 ligase complexes mediating ufmylation, the covalent attachment of the ubiquitin-like modifier UFM1 to substrate proteins, and which is involved in various processes, such as ribosome recycling and reticulophagy (also called ER-phagy). As part of the UREL complex, plays a key role in ribosome recycling by promoting mono-ufmylation of RPL26/uL24 subunit of the 60S ribosome. Ufmylation of RPL26/uL24 occurs on free 60S ribosomes following ribosome dissociation: it weakens the junction between post-termination 60S subunits and SEC61 translocons, promoting release and recycling of the large ribosomal subunit from the endoplasmic reticulum membrane. Ufmylation of RPL26/uL24 and subsequent 60S ribosome recycling either take place after normal termination of translation or after ribosome stalling during cotranslational translocation at the endoplasmic reticulum. Within the UREL complex, CDK5RAP3 acts as a substrate adapter that constrains UFL1 ligase activity to mono-ufmylate RPL26/uL24 at 'Lys-134'. The UREL complex is also involved in reticulophagy in response to endoplasmic reticulum stress by promoting ufmylation of proteins such as CYB5R3, thereby promoting lysosomal degradation of ufmylated proteins. Also acts as a regulator of transcription: negatively regulates NF-kappa-B-mediated gene transcription through the control of RELA phosphorylation. Also regulates mitotic G2/M transition checkpoint and mitotic G2 DNA damage checkpoint. Through its interaction with CDKN2A/ARF and MDM2 may induce MDM2-dependent p53/TP53 ubiquitination, stabilization and activation in the nucleus, thereby promoting G1 cell cycle arrest and inhibition of cell proliferation. May also play a role in the rupture of the nuclear envelope during apoptosis. May regulate MAPK14 activity by regulating its dephosphorylation by PPM1D/WIP1. Required for liver development. The sequence is that of CDK5 regulatory subunit-associated protein 3 from Rattus norvegicus (Rat).